Consider the following 337-residue polypeptide: Leucine-rich repeat-containing protein 39 (337 aa).

LRR repeat units follow at residues 84–105, 107–128, 130–152, 153–176, 177–198, 200–221, 223–244, 246–267, and 269–290; these read QLQE…IGRF, HLIV…IGLL, RLQE…SNCT, SLEK…SKLL, KLTH…VLDM, ALEW…LDRM, SLHT…IKNM, NLGT…MEEM, and NLRF…PPSD.

Interacts with MYH7 (via C-terminus). Expressed in heart and skeletal muscle.

It localises to the cytoplasm. It is found in the myofibril. The protein resides in the sarcomere. Its subcellular location is the m line. Component of the sarcomeric M-band which plays a role in myocyte response to biomechanical stress. May regulate expression of other M-band proteins via an SRF-dependent pathway. Important for normal contractile function in heart. The sequence is that of Leucine-rich repeat-containing protein 39 from Mus musculus (Mouse).